The sequence spans 766 residues: Alpha-onocerin synthase LCD (766 aa).

PFTB repeat units lie at residues 101–143 (LCRA…GALD), 151–192 (QREI…RLMG), 456–507 (QESY…STTD), 517–558 (IHEC…PGYK), 594–634 (IQEG…LASG), 643–684 (IQRA…HVVH), and 705–752 (LHRA…WALG). The Proton donor role is filled by D488.

Belongs to the terpene cyclase/mutase family.

It catalyses the reaction pre-alpha-onocerin = alpha-onocerin. The protein operates within secondary metabolite biosynthesis; terpenoid biosynthesis. In terms of biological role, oxidosqualene cyclase involved in the biosynthesis of alpha-onocerin, a triterpenoid characterized by a symmetrical structure due to cyclizations at both termini of dioxidosqualene that inhibits acetylcholinesterase. Catalyzes the second half of the cyclization, exclusively from pre-alpha-onocerin. This is Alpha-onocerin synthase LCD from Lycopodium clavatum (Stag's-horn clubmoss).